We begin with the raw amino-acid sequence, 2450 residues long: Tetratricopeptide repeat protein 28 (2450 aa).

Position 1 is an N-acetylmethionine (Met-1). Residues 1–36 form a disordered region; that stretch reads MEQPPPLAPEPASARSRRRREPESPPAPIPLFGART. At Ser-24 the chain carries Phosphoserine. TPR repeat units lie at residues 52 to 85, 87 to 119, 120 to 153, 190 to 223, 228 to 261, 268 to 301, 308 to 341, 348 to 381, 388 to 421, 428 to 461, 468 to 501, 508 to 541, 548 to 581, 588 to 621, 628 to 661, 668 to 701, 708 to 741, 748 to 781, 788 to 821, 828 to 861, 871 to 904, 911 to 944, 951 to 984, 991 to 1024, 1031 to 1064, 1071 to 1104, 1111 to 1144, and 1163 to 1196; these read FVEK…DPQN, ILYS…NPKW, PKAY…DPKS, FVVV…GTCS, GSVF…AKTL, CRAH…AMKL, SSAL…AKQS, AREL…AKDL, ARAY…AQEL, MRAY…AEDL, GRAS…AQEL, GRAY…SMEV, ASTH…AREL, ARAL…APDL, GKVC…AKDL, AKAY…AQSL, FRAL…SHHV, ASAY…YQEL, CRAH…GRKL, AQVY…LQQL, GRAY…AQSL, AKAY…AHEL, AQAY…ARDM, SDAA…AEET, GRAY…AAQM, TVSY…AEQL, AKIR…FETI, and TSSY…AFAD. The disordered stretch occupies residues 1362–1381; sequence SGTVSPSKDGTSSLPRRQNS. Phosphoserine is present on residues Ser-1584 and Ser-2098. A disordered region spans residues 2001 to 2364; that stretch reads KPEGGLEGGG…GTLTSKRDVL (364 aa). Over residues 2090–2116 the composition is skewed to polar residues; the sequence is SVSSKGSVSTPNSPVKMTLIPSPNSPF. Residues 2124-2140 show a composition bias toward low complexity; that stretch reads SSDTGESDQSSTETDST. Residues 2143–2153 are compositionally biased toward basic and acidic residues; the sequence is SQEESTPKLDP. Residues 2191–2206 are compositionally biased toward polar residues; it reads APSSTTVFRASETSAF. Ser-2216 is modified (phosphoserine). A compositionally biased stretch (polar residues) spans 2229-2245; it reads ARSSSLPKVSSPATSEV. 2 stretches are compositionally biased toward low complexity: residues 2252–2262 and 2296–2320; these read SPPGSSHPSPG and SPAC…SPAD. A phosphoserine mark is found at Ser-2365 and Ser-2370.

As to quaternary structure, interacts with AURKB. In terms of tissue distribution, expressed in embryos at all stages examined. In adult tissues, detected in heart and at low levels in kidney and testis.

The protein resides in the cytoplasm. It is found in the cytoskeleton. Its subcellular location is the microtubule organizing center. The protein localises to the centrosome. It localises to the spindle. The protein resides in the spindle pole. It is found in the midbody. In terms of biological role, during mitosis, may be involved in the condensation of spindle midzone microtubules, leading to the formation of midbody. Its function is as follows. Essential for the formation and integrity of the midbody. Max play a critical role in the progress of mitosis and cytokinesis during cell cycle. This Mus musculus (Mouse) protein is Tetratricopeptide repeat protein 28 (Ttc28).